A 94-amino-acid chain; its full sequence is Co-chaperonin GroES (94 aa).

The protein belongs to the GroES chaperonin family. Heptamer of 7 subunits arranged in a ring. Interacts with the chaperonin GroEL.

It localises to the cytoplasm. In terms of biological role, together with the chaperonin GroEL, plays an essential role in assisting protein folding. The GroEL-GroES system forms a nano-cage that allows encapsulation of the non-native substrate proteins and provides a physical environment optimized to promote and accelerate protein folding. GroES binds to the apical surface of the GroEL ring, thereby capping the opening of the GroEL channel. This Staphylococcus aureus (strain Mu50 / ATCC 700699) protein is Co-chaperonin GroES.